The following is a 261-amino-acid chain: Potassium/proton antiporter CemA (261 aa).

3 helical membrane passes run 138 to 158 (IISH…CLIL), 186 to 206 (ILLV…ELMI), and 221 to 241 (IISG…KYWI).

The protein belongs to the CemA family.

It is found in the plastid. The protein resides in the chloroplast inner membrane. The catalysed reaction is K(+)(in) + H(+)(out) = K(+)(out) + H(+)(in). Functionally, contributes to K(+)/H(+) antiport activity by supporting proton efflux to control proton extrusion and homeostasis in chloroplasts in a light-dependent manner to modulate photosynthesis. Prevents excessive induction of non-photochemical quenching (NPQ) under continuous-light conditions. Indirectly promotes efficient inorganic carbon uptake into chloroplasts. The protein is Potassium/proton antiporter CemA of Cryptomeria japonica (Japanese cedar).